A 180-amino-acid chain; its full sequence is Large ribosomal subunit protein bL17 (180 aa).

The segment at Ala-134–Asn-180 is disordered.

This sequence belongs to the bacterial ribosomal protein bL17 family. As to quaternary structure, part of the 50S ribosomal subunit. Contacts protein L32.

This chain is Large ribosomal subunit protein bL17, found in Mycobacterium tuberculosis (strain CDC 1551 / Oshkosh).